Reading from the N-terminus, the 163-residue chain is uncharacterized protein (163 aa).

Positions 30–163 are disordered; sequence GNENTSVSSD…IYKKLGKKKR (134 aa). A compositionally biased stretch (basic and acidic residues) spans 88-118; the sequence is ERQLQKKKEAEKIEGGKNHDNLKRKLNKVGD. Over residues 119-133 the composition is skewed to acidic residues; it reads ELNEQQSDTDDDDDD. Serine 125 bears the Phosphoserine mark. Position 127 is a phosphothreonine (threonine 127).

It localises to the nucleus. The protein localises to the nucleolus. This is an uncharacterized protein from Schizosaccharomyces pombe (strain 972 / ATCC 24843) (Fission yeast).